The following is a 744-amino-acid chain: Scytalone dehydratase-like protein Arp1 (744 aa).

Residue Y621 coordinates substrate. Residues H656 and H681 contribute to the active site. N702 contacts substrate.

This sequence belongs to the scytalone dehydratase family. In terms of assembly, homotrimer. Each subunit contains an active site, located in the central part of the hydrophobic core of the monomer, which functions independently.

Functionally, scytalone dehydratase-like protein; part of the Pks2 gene cluster that mediates the formation of infectious structures (appressoria), enabling these fungi to kill insects faster. The product of the Pks2 gene cluster is different from the one of Pks1 and has still not been identified. The protein is Scytalone dehydratase-like protein Arp1 of Metarhizium brunneum (strain ARSEF 3297).